A 398-amino-acid polypeptide reads, in one-letter code: Candidapepsin-3 (398 aa).

An N-terminal signal peptide occupies residues 1-18 (MFLKNIFIALAIALLADA). Positions 19–58 (TPTTSNNSPGFVALNFDVIKTHKNVTGPQGEINTNVNVKR) are cleaved as a propeptide — activation peptide. Asn42 carries N-linked (GlcNAc...) asparagine glycosylation. The region spanning 72-384 (YASDITVGSN…DLDDNEISLA (313 aa)) is the Peptidase A1 domain. Asp90 is an active-site residue. 90 to 92 (DTG) lines the pepstatin A pocket. The span at 103-112 (VSCQAGQGQD) shows a compositional bias: polar residues. The disordered stretch occupies residues 103–139 (VSCQAGQGQDPNFCKNEGTYSPSSSSSSQNLNSPFSI). Cys105 and Cys116 are joined by a disulfide. Residues 123-138 (SPSSSSSSQNLNSPFS) show a composition bias toward low complexity. Pepstatin A-binding positions include 140–143 (EYGD) and 274–278 (DSGTT). Asp274 is a catalytic residue. Cys312 and Cys350 are joined by a disulfide. Residue Asn313 is glycosylated (N-linked (GlcNAc...) asparagine).

This sequence belongs to the peptidase A1 family. In terms of processing, O-glycosylated.

The protein resides in the secreted. It catalyses the reaction Preferential cleavage at the carboxyl of hydrophobic amino acids, but fails to cleave 15-Leu-|-Tyr-16, 16-Tyr-|-Leu-17 and 24-Phe-|-Phe-25 of insulin B chain. Activates trypsinogen, and degrades keratin.. This chain is Candidapepsin-3 (SAP3), found in Candida albicans (strain WO-1) (Yeast).